Here is a 44-residue protein sequence, read N- to C-terminus: Defensin ARD1 (44 aa).

Intrachain disulfides connect cysteine 7–cysteine 32, cysteine 18–cysteine 40, and cysteine 22–cysteine 42.

It localises to the secreted. In terms of biological role, possesses potent anti-fungal activity. The polypeptide is Defensin ARD1 (Archaeoprepona demophon (One-spotted leafwing butterfly)).